The primary structure comprises 370 residues: Dual-specificity RNA methyltransferase RlmN (370 aa).

Catalysis depends on Glu93, which acts as the Proton acceptor. A Radical SAM core domain is found at 99–337; sequence EEGRGTLCVS…VTTVRKTRGD (239 aa). Cys106 and Cys343 form a disulfide bridge. [4Fe-4S] cluster is bound by residues Cys113, Cys117, and Cys120. S-adenosyl-L-methionine is bound by residues 167-168, Ser199, 221-223, and Asn300; these read GE and SLH. The active-site S-methylcysteine intermediate is Cys343.

Belongs to the radical SAM superfamily. RlmN family. It depends on [4Fe-4S] cluster as a cofactor.

It is found in the cytoplasm. The enzyme catalyses adenosine(2503) in 23S rRNA + 2 reduced [2Fe-2S]-[ferredoxin] + 2 S-adenosyl-L-methionine = 2-methyladenosine(2503) in 23S rRNA + 5'-deoxyadenosine + L-methionine + 2 oxidized [2Fe-2S]-[ferredoxin] + S-adenosyl-L-homocysteine. The catalysed reaction is adenosine(37) in tRNA + 2 reduced [2Fe-2S]-[ferredoxin] + 2 S-adenosyl-L-methionine = 2-methyladenosine(37) in tRNA + 5'-deoxyadenosine + L-methionine + 2 oxidized [2Fe-2S]-[ferredoxin] + S-adenosyl-L-homocysteine. Functionally, specifically methylates position 2 of adenine 2503 in 23S rRNA and position 2 of adenine 37 in tRNAs. m2A2503 modification seems to play a crucial role in the proofreading step occurring at the peptidyl transferase center and thus would serve to optimize ribosomal fidelity. The chain is Dual-specificity RNA methyltransferase RlmN from Francisella tularensis subsp. holarctica (strain FTNF002-00 / FTA).